Here is a 551-residue protein sequence, read N- to C-terminus: Cytochrome P450 monooxygenase FCK2 (551 aa).

Helical transmembrane passes span Phe8–Phe28, Leu35–Val55, and Val69–Leu89. Asn258 carries an N-linked (GlcNAc...) asparagine glycan. Cys493 serves as a coordination point for heme.

The protein belongs to the cytochrome P450 family. It depends on heme as a cofactor.

It localises to the membrane. Its pathway is secondary metabolite biosynthesis. Its function is as follows. Cytochrome P450 monooxygenase; part of the gene cluster that mediates the biosynthesis of cytokinins such as fusatin, fusatinic acids or 8-oxofusatin, known for their growth promoting and anti-senescence activities toward host plants. FCK1 is a bifunctional enzyme that performs the first steps in the biosynthesis of Fusarium cytokinins. It first condenses adenosine monophosphate (AMP) with dimethylallyl diphosphate (DMAPP) to yield isoprenyl adenosine monophosphate. It then catalyzes the removal of the phosphoribose to produce isopentenylaldehyde. The cytochrome P450 monooxygenase then converts isopentenylaldehyde to trans-zeatin. A condensation step converts trans-zeatin to fusatin which is further modified to produce fusatinic acid. The mechanism for oxidation of fusatin to fusatinic acid remains unknown. 8-oxofusatin could be produced through several pathways, via direct oxygenation of fusatin, or via the 8-oxo-pentenyladenine intermediate which itself must arise from either the prenylation of 8-oxo-AMP by FCK1 and/or oxygenation of isopentenylaldehyde. Both the FCK3 and FCK4 enzymes act downstream of the identified cytokinins to produce yet unidentified compounds. This is Cytochrome P450 monooxygenase FCK2 from Fusarium pseudograminearum (strain CS3096) (Wheat and barley crown-rot fungus).